Reading from the N-terminus, the 84-residue chain is Small ribosomal subunit protein uS17 (84 aa).

Belongs to the universal ribosomal protein uS17 family. In terms of assembly, part of the 30S ribosomal subunit.

Functionally, one of the primary rRNA binding proteins, it binds specifically to the 5'-end of 16S ribosomal RNA. The chain is Small ribosomal subunit protein uS17 from Clostridium botulinum (strain 657 / Type Ba4).